Here is a 277-residue protein sequence, read N- to C-terminus: Small ribosomal subunit protein uS3 (277 aa).

Residues 43 to 111 (IRELMSKGMD…QIQLNILEVK (69 aa)) form the KH type-2 domain. A disordered region spans residues 217 to 277 (AAQQAAAPSS…AEANNAEGGK (61 aa)). A compositionally biased stretch (basic and acidic residues) spans 245 to 258 (NDRNDRGGRRERDS). Over residues 259-277 (AAAPQQNSAAEANNAEGGK) the composition is skewed to low complexity.

This sequence belongs to the universal ribosomal protein uS3 family. As to quaternary structure, part of the 30S ribosomal subunit. Forms a tight complex with proteins S10 and S14.

Functionally, binds the lower part of the 30S subunit head. Binds mRNA in the 70S ribosome, positioning it for translation. This is Small ribosomal subunit protein uS3 from Kocuria rhizophila (strain ATCC 9341 / DSM 348 / NBRC 103217 / DC2201).